The sequence spans 658 residues: Threonine--tRNA ligase (658 aa).

One can recognise a TGS domain in the interval 1-63; sequence MDQITITFPD…DDNASIDFVA (63 aa). Positions 245–548 are catalytic; it reads DHRKLGRELD…LIEHYAGNFP (304 aa). Positions 341, 392, and 525 each coordinate Zn(2+).

The protein belongs to the class-II aminoacyl-tRNA synthetase family. In terms of assembly, homodimer. Zn(2+) is required as a cofactor.

The protein localises to the cytoplasm. The catalysed reaction is tRNA(Thr) + L-threonine + ATP = L-threonyl-tRNA(Thr) + AMP + diphosphate + H(+). In terms of biological role, catalyzes the attachment of threonine to tRNA(Thr) in a two-step reaction: L-threonine is first activated by ATP to form Thr-AMP and then transferred to the acceptor end of tRNA(Thr). Also edits incorrectly charged L-seryl-tRNA(Thr). In Rhodopseudomonas palustris (strain ATCC BAA-98 / CGA009), this protein is Threonine--tRNA ligase.